Here is a 200-residue protein sequence, read N- to C-terminus: Pyridoxine/pyridoxamine 5'-phosphate oxidase (200 aa).

FMN is bound by residues 48–53 (RMVLLK), 63–64 (YT), Lys-70, and Gln-92. Lys-53 contacts substrate. Residues Tyr-110, Arg-114, and Ser-118 each coordinate substrate. Residues 127–128 (QS) and Trp-171 each bind FMN. 177–179 (RLH) serves as a coordination point for substrate. Residue Arg-181 participates in FMN binding.

This sequence belongs to the pyridoxamine 5'-phosphate oxidase family. Homodimer. FMN is required as a cofactor.

The catalysed reaction is pyridoxamine 5'-phosphate + O2 + H2O = pyridoxal 5'-phosphate + H2O2 + NH4(+). The enzyme catalyses pyridoxine 5'-phosphate + O2 = pyridoxal 5'-phosphate + H2O2. It functions in the pathway cofactor metabolism; pyridoxal 5'-phosphate salvage; pyridoxal 5'-phosphate from pyridoxamine 5'-phosphate: step 1/1. Its pathway is cofactor metabolism; pyridoxal 5'-phosphate salvage; pyridoxal 5'-phosphate from pyridoxine 5'-phosphate: step 1/1. Functionally, catalyzes the oxidation of either pyridoxine 5'-phosphate (PNP) or pyridoxamine 5'-phosphate (PMP) into pyridoxal 5'-phosphate (PLP). This Cereibacter sphaeroides (strain ATCC 17023 / DSM 158 / JCM 6121 / CCUG 31486 / LMG 2827 / NBRC 12203 / NCIMB 8253 / ATH 2.4.1.) (Rhodobacter sphaeroides) protein is Pyridoxine/pyridoxamine 5'-phosphate oxidase.